We begin with the raw amino-acid sequence, 528 residues long: UDP-glucuronosyltransferase 2A1 (528 aa).

A signal peptide spans 1 to 21; it reads MLKNILLCSLQISLLGMSLGG. Residues 22-494 are Extracellular-facing; it reads NVLIWPMEGS…FQYHSLDVIG (473 aa). N-linked (GlcNAc...) asparagine glycosylation occurs at Asn49. The residue at position 135 (Lys135) is an N6-succinyllysine. Asn314 carries N-linked (GlcNAc...) asparagine glycosylation. A helical membrane pass occupies residues 495-515; it reads FLLACVASAILLVAKCCLFIF. The Cytoplasmic portion of the chain corresponds to 516–528; sequence QKVGKTGKKKKRD.

The protein belongs to the UDP-glycosyltransferase family.

The protein localises to the membrane. The catalysed reaction is glucuronate acceptor + UDP-alpha-D-glucuronate = acceptor beta-D-glucuronoside + UDP + H(+). It carries out the reaction 16beta,17beta-estriol + UDP-alpha-D-glucuronate = 16beta,17beta-estriol 16-O-(beta-D-glucuronate) + UDP + H(+). The enzyme catalyses 16alpha,17alpha-estriol + UDP-alpha-D-glucuronate = 16alpha,17alpha-estriol 16-O-(beta-D-glucuronate) + UDP + H(+). It catalyses the reaction 17alpha-estradiol + UDP-alpha-D-glucuronate = 17alpha-estradiol 17-O-(beta-D-glucuronate) + UDP + H(+). The catalysed reaction is 17alpha-estradiol + UDP-alpha-D-glucuronate = 17alpha-estradiol 3-O-(beta-D-glucuronate) + UDP + H(+). It carries out the reaction 17beta-estradiol + UDP-alpha-D-glucuronate = 17beta-estradiol 3-O-(beta-D-glucuronate) + UDP + H(+). The enzyme catalyses 17beta-estradiol + UDP-alpha-D-glucuronate = 17beta-estradiol 17-O-(beta-D-glucuronate) + UDP + H(+). It catalyses the reaction testosterone + UDP-alpha-D-glucuronate = testosterone 17-O-(beta-D-glucuronate) + UDP + H(+). The catalysed reaction is epitestosterone + UDP-alpha-D-glucuronate = epitestosterone 17-O-(beta-D-glucuronate) + UDP + H(+). It carries out the reaction lithocholate + UDP-alpha-D-glucuronate = lithocholoyl-3-O-(beta-D-glucuronate) + UDP + H(+). The enzyme catalyses lithocholate + UDP-alpha-D-glucuronate = lithocholoyl-24-O-(beta-D-glucuronate) + UDP. It catalyses the reaction deoxycholate + UDP-alpha-D-glucuronate = deoxycholoyl-24-O-(beta-D-glucuronate) + UDP. The catalysed reaction is hyodeoxycholate + UDP-alpha-D-glucuronate = hyodeoxycholate 6-O-(beta-D-glucuronate) + UDP + H(+). It carries out the reaction hyocholate + UDP-alpha-D-glucuronate = hyocholoyl-24-O-(beta-D-glucuronate) + UDP. In terms of biological role, UDP-glucuronosyltransferase (UGT) that catalyzes phase II biotransformation reactions in which lipophilic substrates are conjugated with glucuronic acid to increase the metabolite's water solubility, thereby facilitating excretion into either the urine or bile. Essential for the elimination and detoxification of drugs, xenobiotics and endogenous compounds. Catalyzes the glucuronidation of endogenous steroid hormones such as androgens (testosterones) and estrogens (estradiol and estriol). Contributes to bile acid (BA) detoxification by catalyzing the glucuronidation of BA substrates, which are natural detergents for dietary lipids absorption. Shows a high affinity to aliphatic odorants such as citronellol as well as olfactory tissue specificity, and therefore may be involved in olfaction. The sequence is that of UDP-glucuronosyltransferase 2A1 from Mus musculus (Mouse).